We begin with the raw amino-acid sequence, 185 residues long: MKKNKLSIKTIVAIGIGSAVFMILGRFGSLPTGIPNTNIETAYAFLALMALLYGPLAGFLIGFIGHALKDIVFFGSPWISWVFASGIVGLIIGFGARFIKINQGVFKLKQIFMFNLIQIIANGVAWFLVAPTLDILIYSEPANKVYLQGVIGGISNMVTVGVLGTILIANYAKTRIQKGSLRKEY.

The next 5 membrane-spanning stretches (helical) occupy residues 11–31 (IVAI…GSLP), 44–64 (AFLA…IGFI), 71–91 (IVFF…VGLI), 111–131 (IFMF…LVAP), and 149–169 (GVIG…ILIA).

Belongs to the UPF0397 family.

It localises to the cell membrane. In Clostridium perfringens (strain ATCC 13124 / DSM 756 / JCM 1290 / NCIMB 6125 / NCTC 8237 / Type A), this protein is UPF0397 protein CPF_1836.